A 101-amino-acid polypeptide reads, in one-letter code: MHLLKGGVVLIITLILFLITSSIVAIREDPSLIGVDRQIPTGPDPLHNPPQPSPKHHHWIGVEENNIDRSWNYVDYESHHAHSPIHNSPEPAPLYRHLIGV.

Positions methionine 1 to alanine 25 are cleaved as a signal peptide. The tract at residues arginine 37–histidine 58 is disordered. Hydroxyproline occurs at positions 40 and 43. Residues glycine 42–serine 53 show a composition bias toward pro residues. O-linked (Ara...) hydroxyproline glycosylation occurs at proline 43. The residue at position 76 (tyrosine 76) is a Sulfotyrosine. Proline 84 bears the Hydroxyproline mark.

The protein belongs to the CLV3/ESR signal peptide family. The tyrosine sulfation is critical for the function of the peptide. In terms of processing, the O-glycosylation (arabinosylation) of the hydroxyproline Pro-43 enhances binding affinity of the CLE18p peptide for its receptor. Expressed in roots, leaves, siliques and seedlings.

The protein resides in the secreted. It localises to the extracellular space. Its function is as follows. Root growth factor that regulates the pattern of root growth and lateral root development by modulating the length and the number of cortical cells in the root apical meristem (RAM), and the anticlinal asymmetric cell divisions in lateral root initiation cells. In terms of biological role, extracellular signal peptide that regulates cell fate. Represses root apical meristem maintenance. Root growth factor that regulates the pattern of root growth and lateral root development. Regulates the transition of protophloem cells from proliferation to differentiation, thus impinging on postembryonic growth capacity of the root meristem; this signaling pathway requires CRN and CLV2. In Arabidopsis thaliana (Mouse-ear cress), this protein is CLAVATA3/ESR (CLE)-related protein 18.